Here is a 399-residue protein sequence, read N- to C-terminus: Bone morphogenetic protein 8A (399 aa).

The N-terminal stretch at 1 to 19 (MAMRPGPLWLLGLALCALG) is a signal peptide. Positions 20–260 (GGHGPRPPHT…ASQSPVRAPR (241 aa)) are excised as a propeptide. Asn-155 is a glycosylation site (N-linked (GlcNAc...) asparagine). The segment at 257 to 286 (RAPRAARPLKRRQPKKTNELPHPNKLPGIF) is disordered. 3 cysteine pairs are disulfide-bonded: Cys-298–Cys-364, Cys-327–Cys-396, and Cys-331–Cys-398. Asn-340 carries an N-linked (GlcNAc...) asparagine glycan.

This sequence belongs to the TGF-beta family. Homodimer; disulfide-linked. In terms of tissue distribution, expressed in testis. expressed in trophoblast cells of the labyrinthine region of the placenta and in the inner root sheath of hair follicles of early postnatal skin. Expressed predominantly in the neonatal mouse spermatogonia.

Its subcellular location is the secreted. Its function is as follows. Growth factor of the TGF-beta superfamily that plays important role in various biological processes, including spermatogenesis, osteogenesis, steroidogenesis as well as regulation of energy balance. Initiates the canonical BMP signaling cascade by associating with type I receptor BMPR1A and type II receptor BMPR2. Once all three components are bound together in a complex at the cell surface, BMPR2 phosphorylates and activates BMPR1A. In turn, BMPR1A propagates signal by phosphorylating SMAD1/5/8 that travel to the nucleus and act as activators and repressors of transcription of target genes. In addition, activates the SMAD2/3 pathway. The sequence is that of Bone morphogenetic protein 8A (Bmp8a) from Mus musculus (Mouse).